The chain runs to 275 residues: Ribosomal RNA small subunit methyltransferase A (275 aa).

S-adenosyl-L-methionine is bound by residues N21, L23, G48, E69, D94, and N115.

It belongs to the class I-like SAM-binding methyltransferase superfamily. rRNA adenine N(6)-methyltransferase family. RsmA subfamily.

It is found in the cytoplasm. It carries out the reaction adenosine(1518)/adenosine(1519) in 16S rRNA + 4 S-adenosyl-L-methionine = N(6)-dimethyladenosine(1518)/N(6)-dimethyladenosine(1519) in 16S rRNA + 4 S-adenosyl-L-homocysteine + 4 H(+). Its function is as follows. Specifically dimethylates two adjacent adenosines (A1518 and A1519) in the loop of a conserved hairpin near the 3'-end of 16S rRNA in the 30S particle. May play a critical role in biogenesis of 30S subunits. This chain is Ribosomal RNA small subunit methyltransferase A, found in Clostridium botulinum (strain Langeland / NCTC 10281 / Type F).